The chain runs to 422 residues: ATP-dependent RNA helicase RhlB (422 aa).

The Q motif motif lies at 9-37; it reads QKFSDFALHPLVIKAIENQGFYHCTPIQA. The region spanning 40 to 219 is the Helicase ATP-binding domain; sequence FPITLAGRDV…FEQMNHPEYI (180 aa). Position 53–60 (53–60) interacts with ATP; that stretch reads AQTGTGKT. Residues 165–168 carry the DEAD box motif; that stretch reads DEAD. The Helicase C-terminal domain occupies 245–390; sequence RLLQTLIEEE…TSEYNKEALL (146 aa). Residues 394–422 are disordered; that stretch reads PQPKRLQRHHRHYAGSRNQGASRKPRSPQ. Basic residues predominate over residues 398–407; it reads RLQRHHRHYA.

It belongs to the DEAD box helicase family. RhlB subfamily. In terms of assembly, component of the RNA degradosome, which is a multiprotein complex involved in RNA processing and mRNA degradation.

It localises to the cytoplasm. It carries out the reaction ATP + H2O = ADP + phosphate + H(+). DEAD-box RNA helicase involved in RNA degradation. Has RNA-dependent ATPase activity and unwinds double-stranded RNA. The protein is ATP-dependent RNA helicase RhlB of Hamiltonella defensa subsp. Acyrthosiphon pisum (strain 5AT).